An 86-amino-acid polypeptide reads, in one-letter code: Large ribosomal subunit protein bL31 (86 aa).

Zn(2+) contacts are provided by Cys-16, Cys-18, Cys-38, and Cys-41.

It belongs to the bacterial ribosomal protein bL31 family. Type A subfamily. In terms of assembly, part of the 50S ribosomal subunit. It depends on Zn(2+) as a cofactor.

In terms of biological role, binds the 23S rRNA. In Acidothermus cellulolyticus (strain ATCC 43068 / DSM 8971 / 11B), this protein is Large ribosomal subunit protein bL31.